The primary structure comprises 76 residues: Large ribosomal subunit protein bL31 (76 aa).

Cys-16, Cys-18, Cys-37, and Cys-40 together coordinate Zn(2+).

Belongs to the bacterial ribosomal protein bL31 family. Type A subfamily. In terms of assembly, part of the 50S ribosomal subunit. Zn(2+) is required as a cofactor.

Functionally, binds the 23S rRNA. This Maridesulfovibrio salexigens (strain ATCC 14822 / DSM 2638 / NCIMB 8403 / VKM B-1763) (Desulfovibrio salexigens) protein is Large ribosomal subunit protein bL31.